The primary structure comprises 211 residues: ATP phosphoribosyltransferase (211 aa).

This sequence belongs to the ATP phosphoribosyltransferase family. Short subfamily. As to quaternary structure, heteromultimer composed of HisG and HisZ subunits.

The protein resides in the cytoplasm. The enzyme catalyses 1-(5-phospho-beta-D-ribosyl)-ATP + diphosphate = 5-phospho-alpha-D-ribose 1-diphosphate + ATP. It participates in amino-acid biosynthesis; L-histidine biosynthesis; L-histidine from 5-phospho-alpha-D-ribose 1-diphosphate: step 1/9. Catalyzes the condensation of ATP and 5-phosphoribose 1-diphosphate to form N'-(5'-phosphoribosyl)-ATP (PR-ATP). Has a crucial role in the pathway because the rate of histidine biosynthesis seems to be controlled primarily by regulation of HisG enzymatic activity. The sequence is that of ATP phosphoribosyltransferase from Pseudomonas syringae pv. tomato (strain ATCC BAA-871 / DC3000).